The chain runs to 223 residues: Large ribosomal subunit protein bL25 (223 aa).

A disordered region spans residues 198 to 223 (EEIGDRPRSAEEGAAPVKERKLRESE).

This sequence belongs to the bacterial ribosomal protein bL25 family. CTC subfamily. In terms of assembly, part of the 50S ribosomal subunit; part of the 5S rRNA/L5/L18/L25 subcomplex. Contacts the 5S rRNA. Binds to the 5S rRNA independently of L5 and L18.

Functionally, this is one of the proteins that binds to the 5S RNA in the ribosome where it forms part of the central protuberance. This Thermomicrobium roseum (strain ATCC 27502 / DSM 5159 / P-2) protein is Large ribosomal subunit protein bL25.